The chain runs to 515 residues: Folate synthesis bifunctional protein, mitochondrial (515 aa).

The N-terminal 28 residues, 1–28 (MSILKCLGVRGNQLCAARNYLKVLGFSS), are a transit peptide targeting the mitochondrion. Residues 47-172 (VIALGSNVGD…PFVMAPLMDL (126 aa)) form an HPPK region. The Pterin-binding domain maps to 230-498 (TLVMGILNLT…NVKDNLDAVK (269 aa)). The DHPS stretch occupies residues 232–515 (VMGILNLTPD…QKSSPIKFKQ (284 aa)). Mg(2+) is bound at residue Asn-237. (7,8-dihydropterin-6-yl)methyl diphosphate contacts are provided by residues Thr-277, Asp-314, Asn-333, Asp-406, Lys-451, and 486-488 (RVH).

It in the N-terminal section; belongs to the HPPK family. This sequence in the C-terminal section; belongs to the DHPS family. As to quaternary structure, homomultimer. Mg(2+) serves as cofactor.

Its subcellular location is the mitochondrion. The catalysed reaction is 6-hydroxymethyl-7,8-dihydropterin + ATP = (7,8-dihydropterin-6-yl)methyl diphosphate + AMP + H(+). The enzyme catalyses (7,8-dihydropterin-6-yl)methyl diphosphate + 4-aminobenzoate = 7,8-dihydropteroate + diphosphate. The protein operates within cofactor biosynthesis; tetrahydrofolate biosynthesis; 2-amino-4-hydroxy-6-hydroxymethyl-7,8-dihydropteridine diphosphate from 7,8-dihydroneopterin triphosphate: step 4/4. Its pathway is cofactor biosynthesis; tetrahydrofolate biosynthesis; 7,8-dihydrofolate from 2-amino-4-hydroxy-6-hydroxymethyl-7,8-dihydropteridine diphosphate and 4-aminobenzoate: step 1/2. In terms of biological role, catalyzes the first two consecutive steps of tetrahydrofolate biosynthesis. This chain is Folate synthesis bifunctional protein, mitochondrial, found in Pisum sativum (Garden pea).